Reading from the N-terminus, the 729-residue chain is Solute carrier family 15 member 2 (729 aa).

Residues 1–34 form a disordered region; that stretch reads MNPFQKNESKETLFSPVSTEEMLPGPPSPPKKST. Residues 1 to 57 are Cytoplasmic-facing; the sequence is MNPFQKNESKETLFSPVSTEEMLPGPPSPPKKSTPKLFGSSYPLSIAFIVVNEFCER. Residue serine 9 is modified to Phosphoserine. Threonine 12 is modified (phosphothreonine). Position 28 is a phosphoserine (serine 28). A helical membrane pass occupies residues 58–78; that stretch reads FSYYGMKAVLTLYFLYFLHWN. The Extracellular portion of the chain corresponds to 79–87; the sequence is EDTSTSVYH. Residues 88–108 traverse the membrane as a helical segment; sequence AFSSLCYFTPILGAAIADSWL. Residues 109-113 lie on the Cytoplasmic side of the membrane; that stretch reads GKFKT. The helical transmembrane segment at 114–134 threads the bilayer; it reads IIYLSLVYVLGHVFKSLGAIP. The Extracellular portion of the chain corresponds to 135 to 139; that stretch reads ILGGK. Residues 140–160 form a helical membrane-spanning segment; that stretch reads MLHTILSLVGLSLIALGTGGI. Residues 161–183 lie on the Cytoplasmic side of the membrane; that stretch reads KPCVAAFGGDQFEEEHAEARTRY. The helical transmembrane segment at 184–204 threads the bilayer; sequence FSVFYLSINAGSLISTFITPM. Topologically, residues 205-217 are extracellular; the sequence is LRGDVKCFGEDCY. The chain crosses the membrane as a helical span at residues 218 to 238; it reads ALAFGIPGLLMVLALVVFAMG. At 239-295 the chain is on the cytoplasmic side; sequence SKMYRKPPPEGNIVAQVTKCIWFAICNRFRNRSEDIPKRQHWLDWAAEKYPKHLIMD. The chain crosses the membrane as a helical span at residues 296-316; it reads VKALTRILFLYIPLPMFWALL. The Extracellular portion of the chain corresponds to 317 to 343; the sequence is DQQGSRWTLQANKMDGDLGFFVLQPDQ. A helical transmembrane segment spans residues 344–364; the sequence is MQVLNPFLVLVFIPLFDLVIY. The Cytoplasmic segment spans residues 365 to 380; it reads RLISKCGVNFSSLRKM. Residues 381–401 form a helical membrane-spanning segment; the sequence is AVGMILACLAFAVAALVEIKI. At 402 to 611 the chain is on the extracellular side; it reads NGMIHPQPAS…PANKLSIAWQ (210 aa). Residues 402–611 are extracellular domain (ECD); the sequence is NGMIHPQPAS…PANKLSIAWQ (210 aa). N-linked (GlcNAc...) asparagine glycans are attached at residues asparagine 448, asparagine 472, asparagine 528, and asparagine 587. The helical transmembrane segment at 612 to 632 threads the bilayer; sequence LPQYVLVTAAEVMFSVTGLEF. Residues 633 to 643 are Cytoplasmic-facing; it reads SYSQAPSSMKS. Residues 644-664 form a helical membrane-spanning segment; it reads VLQAAWLLTVAVGNIIVLIVA. Topologically, residues 665 to 674 are extracellular; that stretch reads QFSGLVQWAE. The chain crosses the membrane as a helical span at residues 675-695; that stretch reads FVLFSCLLLVVCLIFSVMGYY. At 696–729 the chain is on the cytoplasmic side; the sequence is YVPLKSEGIHEATEKQIPHIQGNMINLETKNTRL.

This sequence belongs to the major facilitator superfamily. Proton-dependent oligopeptide transporter (POT/PTR) (TC 2.A.17) family. As to quaternary structure, interacts (via extracellular domain region) with trypsin. Expressed in kidney brush border cells (at protein level). Highly expressed in macrophages.

It localises to the apical cell membrane. The protein resides in the cytoplasmic vesicle. Its subcellular location is the phagosome membrane. It is found in the cell membrane. It catalyses the reaction N-acetyl-D-muramoyl-L-alanyl-D-isoglutamine(out) + 3 H(+)(out) = N-acetyl-D-muramoyl-L-alanyl-D-isoglutamine(in) + 3 H(+)(in). It carries out the reaction a dipeptide(out) + 2 H(+)(out) = a dipeptide(in) + 2 H(+)(in). The catalysed reaction is glycyl-L-leucine(out) + 2 H(+)(out) = glycyl-L-leucine(in) + 2 H(+)(in). The enzyme catalyses glycyl-L-lysine(out) + 2 H(+)(out) = glycyl-L-lysine(in) + 2 H(+)(in). It catalyses the reaction glycyl-L-glutamate(out) + 3 H(+)(out) = glycyl-L-glutamate(in) + 3 H(+)(in). It carries out the reaction L-alanyl-L-alanine(out) + 2 H(+)(out) = L-alanyl-L-alanine(in) + 2 H(+)(in). The catalysed reaction is an L-amino acid tripeptide(out) + 2 H(+)(out) = an L-amino acid tripeptide(in) + 2 H(+)(in). The enzyme catalyses carnosine(out) + 2 H(+)(out) = carnosine(in) + 2 H(+)(in). In terms of biological role, proton-coupled amino-acid transporter that transports oligopeptides of 2 to 4 amino acids with a preference for dipeptides. Transports neutral and anionic dipeptides with a proton to peptide stoichiometry of 2:1 or 3:1. In kidney, involved in the absorption of circulating di- and tripeptides from the glomerular filtrate. Can also transport beta-lactam antibiotics, such as the aminocephalosporin cefadroxil, and other antiviral and anticancer drugs. Transports the dipeptide-like aminopeptidase inhibitor bestatin. Also able to transport carnosine. Involved in innate immunity by promoting the detection of microbial pathogens by NOD-like receptors (NLRs). Mediates transport of bacterial peptidoglycans across the plasma membrane or, in macrophages, the phagosome membrane: catalyzes the transport of certain bacterial peptidoglycans, such as muramyl dipeptide (MDP), the NOD2 ligand. This Mus musculus (Mouse) protein is Solute carrier family 15 member 2.